Reading from the N-terminus, the 327-residue chain is DNA-directed RNA polymerase subunit alpha (327 aa).

The alpha N-terminal domain (alpha-NTD) stretch occupies residues 1-233; it reads MVREKVKVST…NLFIPFLHVE (233 aa). Positions 267-327 are alpha C-terminal domain (alpha-CTD); that stretch reads LAFQYIFIDQ…KKILDILEKK (61 aa).

It belongs to the RNA polymerase alpha chain family. In terms of assembly, in plastids the minimal PEP RNA polymerase catalytic core is composed of four subunits: alpha, beta, beta', and beta''. When a (nuclear-encoded) sigma factor is associated with the core the holoenzyme is formed, which can initiate transcription.

The protein localises to the plastid. It is found in the chloroplast. The catalysed reaction is RNA(n) + a ribonucleoside 5'-triphosphate = RNA(n+1) + diphosphate. In terms of biological role, DNA-dependent RNA polymerase catalyzes the transcription of DNA into RNA using the four ribonucleoside triphosphates as substrates. The protein is DNA-directed RNA polymerase subunit alpha of Lepidium virginicum (Virginia pepperweed).